Here is a 496-residue protein sequence, read N- to C-terminus: Probable malate:quinone oxidoreductase (496 aa).

Belongs to the MQO family. It depends on FAD as a cofactor.

It catalyses the reaction (S)-malate + a quinone = a quinol + oxaloacetate. Its pathway is carbohydrate metabolism; tricarboxylic acid cycle; oxaloacetate from (S)-malate (quinone route): step 1/1. This Prochlorococcus marinus (strain NATL2A) protein is Probable malate:quinone oxidoreductase.